Consider the following 144-residue polypeptide: Putative protein PHLOEM PROTEIN 2-LIKE B4 (144 aa).

This is Putative protein PHLOEM PROTEIN 2-LIKE B4 (PP2B4) from Arabidopsis thaliana (Mouse-ear cress).